The following is a 312-amino-acid chain: Malate dehydrogenase (312 aa).

Residues 7-12 (GAGNVG) and Asp32 each bind NAD(+). Arg82 and Arg88 together coordinate substrate. Residues Asn95 and 118–120 (VSN) each bind NAD(+). The substrate site is built by Asn120 and Arg151. His175 functions as the Proton acceptor in the catalytic mechanism.

This sequence belongs to the LDH/MDH superfamily. MDH type 3 family.

It catalyses the reaction (S)-malate + NAD(+) = oxaloacetate + NADH + H(+). Catalyzes the reversible oxidation of malate to oxaloacetate. The polypeptide is Malate dehydrogenase (Cytophaga hutchinsonii (strain ATCC 33406 / DSM 1761 / CIP 103989 / NBRC 15051 / NCIMB 9469 / D465)).